The sequence spans 508 residues: Protection of telomeres protein tpz1 (508 aa).

The segment at 2-223 is pot1-binding; that stretch reads SNCLKHPWLE…ENTTHGIYLE (222 aa). Disordered stretches follow at residues 159–178, 235–269, and 282–358; these read QEASLSQQEKPNDNTSNSRD, VSETPEVKQEDNDEDLDAYSWSSSTDSAGEIPSLP, and PPPF…QSHR. The segment covering 327 to 347 has biased composition (polar residues); it reads STEQLNSSLTIERSQSIQSTD. Residues 348–358 show a composition bias toward basic and acidic residues; sequence SKQRVETQSHR. The segment at 379-508 is ccq1/poz1-binding; that stretch reads TIDDSTGKLL…KKIEEFRNKS (130 aa).

As to quaternary structure, interacts with ccq1, pot1 and poz1.

The protein resides in the chromosome. Its subcellular location is the telomere. It is found in the nucleus. In terms of biological role, telomeric DNA-binding protein that is required to protect the 3'-end telomeric overhang and involved in telomere length regulation. recruits poz1 and ccq1 to telomeres, regulating telomere length negatively and positively respectively. This chain is Protection of telomeres protein tpz1 (tpz1), found in Schizosaccharomyces pombe (strain 972 / ATCC 24843) (Fission yeast).